The primary structure comprises 443 residues: Probable glycine dehydrogenase (decarboxylating) subunit 1 (443 aa).

The protein belongs to the GcvP family. N-terminal subunit subfamily. As to quaternary structure, the glycine cleavage system is composed of four proteins: P, T, L and H. In this organism, the P 'protein' is a heterodimer of two subunits.

It catalyses the reaction N(6)-[(R)-lipoyl]-L-lysyl-[glycine-cleavage complex H protein] + glycine + H(+) = N(6)-[(R)-S(8)-aminomethyldihydrolipoyl]-L-lysyl-[glycine-cleavage complex H protein] + CO2. Its function is as follows. The glycine cleavage system catalyzes the degradation of glycine. The P protein binds the alpha-amino group of glycine through its pyridoxal phosphate cofactor; CO(2) is released and the remaining methylamine moiety is then transferred to the lipoamide cofactor of the H protein. The protein is Probable glycine dehydrogenase (decarboxylating) subunit 1 of Oleidesulfovibrio alaskensis (strain ATCC BAA-1058 / DSM 17464 / G20) (Desulfovibrio alaskensis).